The chain runs to 853 residues: DNA mismatch repair protein MutS (853 aa).

Position 613-620 (613-620 (GPNMGGKS)) interacts with ATP.

Belongs to the DNA mismatch repair MutS family.

Functionally, this protein is involved in the repair of mismatches in DNA. It is possible that it carries out the mismatch recognition step. This protein has a weak ATPase activity. The polypeptide is DNA mismatch repair protein MutS (Vibrio parahaemolyticus serotype O3:K6 (strain RIMD 2210633)).